Reading from the N-terminus, the 283-residue chain is MTKLITTVKEMQHIVKAAKRSGTTIGFIPTMGALHDGHLTMVRESVSTNDITVVSVFVNPLQFGPNEDFDAYPRQIDKDLELVSEVGADIVFHPAVEDMYPGELGIDVKVGPLADVLEGAKRPGHFDGVVTVVNKLFNIVMPDYAYFGKKDAQQLAIVEQMVKDFNHAVEIIGIDIVREADGLAKSSRNVYLTEQERQEAVHLSKSLLLAQALYQDGERQSKVIIDRVTEYLESHISGRIEEVAVYSYPQLVEQHEITGRIFISLAVKFSKARLIDNIIIGAE.

31–38 (MGALHDGH) is an ATP binding site. His38 (proton donor) is an active-site residue. (R)-pantoate is bound at residue Gln62. Gln62 contributes to the beta-alanine binding site. 148 to 151 (GKKD) is a binding site for ATP. Gln154 lines the (R)-pantoate pocket. Residues Val177 and 185–188 (KSSR) contribute to the ATP site.

Belongs to the pantothenate synthetase family. As to quaternary structure, homodimer.

Its subcellular location is the cytoplasm. It catalyses the reaction (R)-pantoate + beta-alanine + ATP = (R)-pantothenate + AMP + diphosphate + H(+). It functions in the pathway cofactor biosynthesis; (R)-pantothenate biosynthesis; (R)-pantothenate from (R)-pantoate and beta-alanine: step 1/1. Functionally, catalyzes the condensation of pantoate with beta-alanine in an ATP-dependent reaction via a pantoyl-adenylate intermediate. The sequence is that of Pantothenate synthetase from Staphylococcus aureus (strain MSSA476).